Consider the following 515-residue polypeptide: MTDRVIIFDTTLRDGEQALKASLTVKEKLQIALALERLGVDVMEVGFPVSSQGDFESVQTIARHIKNARVTALSRAVDKDIDAAYEALKVAEAFRIHTFIASSALHVEAKLKRSFDDVVGMAVAAVKRARNYTDDVEFSCEDAGRTGIDNICRIVEAAINAGATTVNIPDTVGFCLPNEYGNIIAQVRNRVPNIDKAVISVHCHNDLGMATANSLTAVQNGARQIECTINGIGERAGNTSLEEVVMAMKVRQDFMGVDTRINTQEIHRVSQMVSQLCNMPIQPNKAIVGSNAFAHSSGIHQDGMLKNKNTYEIMSPETIGLKKEKLNLTARSGRAAVKGHMADMGYNEQDYDLDKLYDAFLKLADKKGQVFDYDLEALAFIDMQQGDEDRLVLDKLSAHSTKEYPATAFVQLKLDGNKLITSSIGGNGPVDAVYNAILNLTGLEIKMSHYNLTAKGEGAEALGQVDIVVEHKGRKFHGVGLATDIVESSALALVHAINAIYRAHKVADIKNHKHH.

A Pyruvate carboxyltransferase domain is found at 5–267 (VIIFDTTLRD…DTRINTQEIH (263 aa)). The Mn(2+) site is built by D14, H202, H204, and N238. Residues 392–515 (VLDKLSAHST…VADIKNHKHH (124 aa)) are regulatory domain.

Belongs to the alpha-IPM synthase/homocitrate synthase family. LeuA type 1 subfamily. Homodimer. Mn(2+) is required as a cofactor.

It localises to the cytoplasm. It carries out the reaction 3-methyl-2-oxobutanoate + acetyl-CoA + H2O = (2S)-2-isopropylmalate + CoA + H(+). It functions in the pathway amino-acid biosynthesis; L-leucine biosynthesis; L-leucine from 3-methyl-2-oxobutanoate: step 1/4. Functionally, catalyzes the condensation of the acetyl group of acetyl-CoA with 3-methyl-2-oxobutanoate (2-ketoisovalerate) to form 3-carboxy-3-hydroxy-4-methylpentanoate (2-isopropylmalate). The protein is 2-isopropylmalate synthase of Haemophilus influenzae (strain PittEE).